Consider the following 519-residue polypeptide: UPF0053 protein bbp_300 (519 aa).

Transmembrane regions (helical) follow at residues 13–35 (LLTL…AILS), 48–70 (LIGL…WMVT), 80–102 (YFSF…FKAT), 123–145 (AGFW…DAII), 150–172 (TINN…LIAS), 185–207 (VVVL…ALGF), and 212–231 (GYLY…NQIA). CBS domains follow at residues 311–373 (MTPR…IIDF) and 374–434 (SSTT…DADE).

Belongs to the UPF0053 family.

Its subcellular location is the cell membrane. The chain is UPF0053 protein bbp_300 from Buchnera aphidicola subsp. Baizongia pistaciae (strain Bp).